The sequence spans 396 residues: S-adenosylmethionine synthase 1 (396 aa).

Glu-13 is a Mg(2+) binding site. Position 19 (His-19) interacts with ATP. Glu-47 lines the K(+) pocket. The L-methionine site is built by Glu-60 and Gln-103. ATP is bound by residues 171 to 173 (DGK), 239 to 242 (SGRF), Asp-250, 256 to 257 (RK), Ala-273, Lys-277, and Lys-281. Asp-250 lines the L-methionine pocket. Lys-281 is a binding site for L-methionine.

Belongs to the AdoMet synthase family. As to quaternary structure, homotetramer. Mn(2+) is required as a cofactor. Mg(2+) serves as cofactor. It depends on Co(2+) as a cofactor. Requires K(+) as cofactor.

It localises to the cytoplasm. It carries out the reaction L-methionine + ATP + H2O = S-adenosyl-L-methionine + phosphate + diphosphate. It functions in the pathway amino-acid biosynthesis; S-adenosyl-L-methionine biosynthesis; S-adenosyl-L-methionine from L-methionine: step 1/1. Catalyzes the formation of S-adenosylmethionine from methionine and ATP. The reaction comprises two steps that are both catalyzed by the same enzyme: formation of S-adenosylmethionine (AdoMet) and triphosphate, and subsequent hydrolysis of the triphosphate. May be involved in the synthesis of betain in response to abiotic stress such as high salinity. The polypeptide is S-adenosylmethionine synthase 1 (SAMS1) (Beta vulgaris (Sugar beet)).